Reading from the N-terminus, the 261-residue chain is MTDEPALESAALPVLCLENTSAVYAGGVVALSRFNLEVQAGEFCVILGPSGSGKSTLLRLISGLVPTSSGTVTIGGIKMAPPTRRKARQRLGMVHQDHGLIDRLSVLDNVMAGCAGSLPFWRLMLRMYPRPVVDAACQLLDEVGLTEAQANRRARELSGGQRQRVGIARALMGTPLLILADEPVASLDPQTSRIILALLRRAAKDRGIAVLCSLHQMDLAREFADRIVVMRNGRPVFNDCPAELSGFLERSAIPPKRSGAA.

Residues 15–257 form the ABC transporter domain; that stretch reads LCLENTSAVY…LERSAIPPKR (243 aa). An ATP-binding site is contributed by 48 to 55; that stretch reads GPSGSGKS.

This sequence belongs to the ABC transporter superfamily. Phosphonates importer (TC 3.A.1.9.1) family. The complex is composed of two ATP-binding proteins (PhnC), two transmembrane proteins (PhnE) and a solute-binding protein (PhnD).

Its subcellular location is the cell inner membrane. The catalysed reaction is phosphonate(out) + ATP + H2O = phosphonate(in) + ADP + phosphate + H(+). Part of the ABC transporter complex PhnCDE involved in phosphonates import. Responsible for energy coupling to the transport system. This is Phosphonates import ATP-binding protein PhnC from Hyphomonas neptunium (strain ATCC 15444).